Reading from the N-terminus, the 475-residue chain is Ribulose bisphosphate carboxylase large chain (475 aa).

A propeptide spanning residues 1-2 (MV) is cleaved from the precursor. An N-acetylproline modification is found at proline 3. Lysine 14 carries the post-translational modification N6,N6,N6-trimethyllysine. The substrate site is built by asparagine 123 and threonine 173. Residue lysine 175 is the Proton acceptor of the active site. Lysine 177 contacts substrate. Residues lysine 201, aspartate 203, and glutamate 204 each contribute to the Mg(2+) site. An N6-carboxylysine modification is found at lysine 201. Histidine 294 acts as the Proton acceptor in catalysis. Substrate contacts are provided by arginine 295, histidine 327, and serine 379.

This sequence belongs to the RuBisCO large chain family. Type I subfamily. Heterohexadecamer of 8 large chains and 8 small chains. Mg(2+) is required as a cofactor.

It localises to the plastid. Its subcellular location is the chloroplast. The enzyme catalyses 2 (2R)-3-phosphoglycerate + 2 H(+) = D-ribulose 1,5-bisphosphate + CO2 + H2O. It carries out the reaction D-ribulose 1,5-bisphosphate + O2 = 2-phosphoglycolate + (2R)-3-phosphoglycerate + 2 H(+). Its function is as follows. RuBisCO catalyzes two reactions: the carboxylation of D-ribulose 1,5-bisphosphate, the primary event in carbon dioxide fixation, as well as the oxidative fragmentation of the pentose substrate in the photorespiration process. Both reactions occur simultaneously and in competition at the same active site. The protein is Ribulose bisphosphate carboxylase large chain of Chlamydomonas moewusii (Chlamydomonas eugametos).